Here is a 113-residue protein sequence, read N- to C-terminus: Thioredoxin H-type (113 aa).

A Thioredoxin domain is found at 2–112; it reads GGSVIVIDSK…LKALVAKHAA (111 aa). Residues cysteine 37 and cysteine 40 each act as nucleophile in the active site. An intrachain disulfide couples cysteine 37 to cysteine 40.

Belongs to the thioredoxin family. Plant H-type subfamily.

It is found in the cytoplasm. Its function is as follows. Participates in various redox reactions through the reversible oxidation of the active center dithiol to a disulfide. The H form is known to activate a number of cytosolic enzymes. The sequence is that of Thioredoxin H-type (TRXH) from Chlamydomonas reinhardtii (Chlamydomonas smithii).